The sequence spans 486 residues: Kynurenine 3-monooxygenase (486 aa).

2 helical membrane-spanning segments follow: residues 401–424 (LLFWMMPNTWVPLYNSVSFSHMRY) and 437–459 (ILTRVLYGASIASVAAIGGLCYR).

The protein belongs to the aromatic-ring hydroxylase family. KMO subfamily. FAD is required as a cofactor.

It is found in the mitochondrion. Its subcellular location is the membrane. The enzyme catalyses L-kynurenine + NADPH + O2 + H(+) = 3-hydroxy-L-kynurenine + NADP(+) + H2O. It functions in the pathway cofactor biosynthesis; NAD(+) biosynthesis; quinolinate from L-kynurenine: step 1/3. Catalyzes the hydroxylation of L-kynurenine (L-Kyn) to form 3-hydroxy-L-kynurenine (L-3OHKyn). Required for synthesis of quinolinic acid. This is Kynurenine 3-monooxygenase (kh) from Anopheles gambiae (African malaria mosquito).